We begin with the raw amino-acid sequence, 595 residues long: Coronatine-insensitive protein homolog 1a (595 aa).

The region spanning 20–62 (WVPDEALHLVMGHVEDPRDREAASRVCRRWHRIDALTRKHVTV) is the F-box domain. Positions 90, 351, 389, 412, and 499 each coordinate jasmonate.

In terms of assembly, interacts with TIFY6A/JAZ3, TIFY6B/JAZ4 and TIFY11D/JAZ12 in a coronatine-dependent manner. Interacts with TIFY9/JAZ5, TIFY10A/JAZ6, TIFY10B/JAZ7, TIFY11A/JAZ9 and TIFY11C/JAZ11 in a coronatine-dependent manner.

Its function is as follows. Involved in jasmonate (JA) signaling. Required for jasmonate signaling in plant defense responses. Can complement Arabidopsis coi1-1 mutant and restore jasmonate signaling. Required for JA-regulated defense responses to infestation by the leaffolder Cnaphalocrocis medinalis. May act on an initial response of jasmonate-regulated gene expression toward drought tolerance as part of a BHLH148-TIFY11D/JAZ12-COI1A complex. Component of SCF(COI1) E3 ubiquitin ligase complexes, which may mediate the ubiquitination and subsequent proteasomal degradation of target proteins, including TIFY/JAZ family. The sequence is that of Coronatine-insensitive protein homolog 1a from Oryza sativa subsp. indica (Rice).